Reading from the N-terminus, the 385-residue chain is U6 small nuclear RNA (adenine-(43)-N(6))-methyltransferase (385 aa).

Arginine 54, glycine 83, glutamate 106, and asparagine 155 together coordinate S-adenosyl-L-methionine.

This sequence belongs to the methyltransferase superfamily. METTL16/RlmF family.

The protein resides in the cytoplasm. Its subcellular location is the nucleus. It catalyses the reaction adenosine in U6 snRNA + S-adenosyl-L-methionine = N(6)-methyladenosine in U6 snRNA + S-adenosyl-L-homocysteine + H(+). Its function is as follows. RNA N6-methyltransferase that mediates N6-methylation of adenine of U6 small nuclear RNA (U6 snRNA). The sequence is that of U6 small nuclear RNA (adenine-(43)-N(6))-methyltransferase from Schizosaccharomyces pombe (strain 972 / ATCC 24843) (Fission yeast).